Here is a 397-residue protein sequence, read N- to C-terminus: Tryptophan synthase beta chain (397 aa).

Lysine 87 is modified (N6-(pyridoxal phosphate)lysine).

This sequence belongs to the TrpB family. Tetramer of two alpha and two beta chains. Requires pyridoxal 5'-phosphate as cofactor.

It carries out the reaction (1S,2R)-1-C-(indol-3-yl)glycerol 3-phosphate + L-serine = D-glyceraldehyde 3-phosphate + L-tryptophan + H2O. It participates in amino-acid biosynthesis; L-tryptophan biosynthesis; L-tryptophan from chorismate: step 5/5. Its function is as follows. The beta subunit is responsible for the synthesis of L-tryptophan from indole and L-serine. This Klebsiella pneumoniae (strain 342) protein is Tryptophan synthase beta chain.